We begin with the raw amino-acid sequence, 164 residues long: Phosphopantetheine adenylyltransferase (164 aa).

Residue threonine 14 participates in substrate binding. ATP-binding positions include 14 to 15 (TF) and histidine 22. Substrate contacts are provided by lysine 46, leucine 78, and arginine 92. Residues 93 to 95 (GLR), glutamate 103, and 128 to 134 (HAFISST) each bind ATP.

The protein belongs to the bacterial CoaD family. In terms of assembly, homohexamer. It depends on Mg(2+) as a cofactor.

It localises to the cytoplasm. The catalysed reaction is (R)-4'-phosphopantetheine + ATP + H(+) = 3'-dephospho-CoA + diphosphate. It participates in cofactor biosynthesis; coenzyme A biosynthesis; CoA from (R)-pantothenate: step 4/5. Functionally, reversibly transfers an adenylyl group from ATP to 4'-phosphopantetheine, yielding dephospho-CoA (dPCoA) and pyrophosphate. The protein is Phosphopantetheine adenylyltransferase of Vibrio cholerae serotype O1 (strain ATCC 39541 / Classical Ogawa 395 / O395).